The primary structure comprises 195 residues: FMN-dependent NADH:quinone oxidoreductase (195 aa).

Residues Ser10, 16–18, and 88–91 each bind FMN; these read SVS and MYNF.

The protein belongs to the azoreductase type 1 family. As to quaternary structure, homodimer. FMN serves as cofactor.

The catalysed reaction is 2 a quinone + NADH + H(+) = 2 a 1,4-benzosemiquinone + NAD(+). It carries out the reaction N,N-dimethyl-1,4-phenylenediamine + anthranilate + 2 NAD(+) = 2-(4-dimethylaminophenyl)diazenylbenzoate + 2 NADH + 2 H(+). Quinone reductase that provides resistance to thiol-specific stress caused by electrophilic quinones. Functionally, also exhibits azoreductase activity. Catalyzes the reductive cleavage of the azo bond in aromatic azo compounds to the corresponding amines. This chain is FMN-dependent NADH:quinone oxidoreductase, found in Francisella philomiragia subsp. philomiragia (strain ATCC 25017 / CCUG 19701 / FSC 153 / O#319-036).